A 176-amino-acid chain; its full sequence is Photosystem I assembly protein Ycf4 (176 aa).

2 helical membrane passes run 22–42 (FVWAFILFFGSLEFILVGTAS) and 48–68 (LIAFFPQGMVMIFYGISGLFI).

This sequence belongs to the Ycf4 family.

It localises to the plastid thylakoid membrane. Functionally, seems to be required for the assembly of the photosystem I complex. The sequence is that of Photosystem I assembly protein Ycf4 from Cuscuta gronovii (Common dodder).